The chain runs to 591 residues: Inactive metallocarboxypeptidase ECM14 (591 aa).

The first 21 residues, 1 to 21 (MRLFSHLAVLAILACAVPITA), serve as a signal peptide directing secretion. The propeptide occupies 22-175 (IPSFLSNSYP…QTIYESYPSS (154 aa)). A Peptidase M14 domain is found at 203–523 (DYQPFSVIVP…NAVMVLGRFL (321 aa)). Zn(2+) contacts are provided by His265 and Glu268. Substrate-binding positions include 265–268 (HARE), Arg323, and 340–341 (DR). A disulfide bridge links Cys334 with Cys357. Asn350, Asn381, and Asn386 each carry an N-linked (GlcNAc...) asparagine glycan. His397 lines the Zn(2+) pocket. Residue 398–399 (SY) coordinates substrate. The tract at residues 533-591 (DWEDESQRPKADEDDIPSENELDENDDSWIPYDYRNHDDQNEGEGYDNDEWGFRRRRKR) is disordered. 2 stretches are compositionally biased toward acidic residues: residues 544–559 (DEDD…ENDD) and 573–582 (NEGEGYDNDE).

This sequence belongs to the peptidase M14 family. Zn(2+) is required as a cofactor.

The protein resides in the vacuole. The protein localises to the secreted. Inactive carboxypeptidase that may play a role in cell wall organization and biogenesis. This Paracoccidioides brasiliensis (strain Pb18) protein is Inactive metallocarboxypeptidase ECM14 (ECM14).